Consider the following 297-residue polypeptide: PIH1 domain-containing protein 1 (297 aa).

This sequence belongs to the PIH1 family.

The protein localises to the nucleus. Involved in the assembly of C/D box small nucleolar ribonucleoprotein (snoRNP) particles. Recruits the SWI/SNF complex to the core promoter of rRNA genes and enhances pre-rRNA transcription. Mediates interaction of TELO2 with the R2TP complex which is necessary for the stability of MTOR and SMG1. Positively regulates the assembly and activity of the mTORC1 complex. The chain is PIH1 domain-containing protein 1 (pih1d1) from Xenopus laevis (African clawed frog).